Consider the following 317-residue polypeptide: Melanocyte-stimulating hormone receptor (317 aa).

Residues M1–E37 are Extracellular-facing. N29 carries an N-linked (GlcNAc...) asparagine glycan. A helical membrane pass occupies residues V38–I63. At A64 to P72 the chain is on the cytoplasmic side. Residues M73–L93 traverse the membrane as a helical segment. Over E94–N118 the chain is Extracellular. The helical transmembrane segment at V119–V140 threads the bilayer. The Cytoplasmic segment spans residues D141–R163. A helical membrane pass occupies residues A164–Y183. At D184–C191 the chain is on the extracellular side. A helical transmembrane segment spans residues L192–L211. Residues A212 to A240 lie on the Cytoplasmic side of the membrane. The helical transmembrane segment at A241–L266 threads the bilayer. At C267 to N279 the chain is on the extracellular side. Residues F280–F300 traverse the membrane as a helical segment. Topologically, residues R301–W317 are cytoplasmic. Residue C315 is the site of S-palmitoyl cysteine attachment.

This sequence belongs to the G-protein coupled receptor 1 family. In terms of assembly, interacts with MGRN1, but does not undergo MGRN1-mediated ubiquitination; this interaction competes with GNAS-binding and thus inhibits agonist-induced cAMP production. Interacts with OPN3; the interaction results in a decrease in MC1R-mediated cAMP signaling and ultimately a decrease in melanin production in melanocytes.

The protein localises to the cell membrane. Receptor for MSH (alpha, beta and gamma) and ACTH. The activity of this receptor is mediated by G proteins which activate adenylate cyclase. Mediates melanogenesis, the production of eumelanin (black/brown) and phaeomelanin (red/yellow), via regulation of cAMP signaling in melanocytes. The sequence is that of Melanocyte-stimulating hormone receptor (MC1R) from Papio hamadryas (Hamadryas baboon).